Consider the following 328-residue polypeptide: Malate dehydrogenase (328 aa).

Position 11–17 (11–17 (GAAGQIG)) interacts with NAD(+). R94 and R100 together coordinate substrate. NAD(+) contacts are provided by residues N107, Q114, and 131 to 133 (VGN). Substrate is bound by residues N133 and R164. Catalysis depends on H189, which acts as the Proton acceptor.

This sequence belongs to the LDH/MDH superfamily. MDH type 2 family.

The enzyme catalyses (S)-malate + NAD(+) = oxaloacetate + NADH + H(+). Functionally, catalyzes the reversible oxidation of malate to oxaloacetate. This chain is Malate dehydrogenase, found in Xylella fastidiosa (strain M23).